We begin with the raw amino-acid sequence, 248 residues long: PF03932 family protein CutC (248 aa).

Belongs to the CutC family. In terms of assembly, homodimer.

The protein localises to the cytoplasm. The protein is PF03932 family protein CutC of Escherichia coli O157:H7.